The sequence spans 182 residues: Glutathione-regulated potassium-efflux system ancillary protein KefG (182 aa).

This sequence belongs to the NAD(P)H dehydrogenase (quinone) family. KefG subfamily. As to quaternary structure, interacts with KefB.

It is found in the cell inner membrane. The enzyme catalyses a quinone + NADH + H(+) = a quinol + NAD(+). The catalysed reaction is a quinone + NADPH + H(+) = a quinol + NADP(+). Regulatory subunit of a potassium efflux system that confers protection against electrophiles. Required for full activity of KefB. This Yersinia pseudotuberculosis serotype O:1b (strain IP 31758) protein is Glutathione-regulated potassium-efflux system ancillary protein KefG.